We begin with the raw amino-acid sequence, 161 residues long: DNA-directed RNA polymerase 18 kDa subunit (161 aa).

Belongs to the poxviridae DNA-directed RNA polymerase 18 kDa subunit family. The DNA-dependent RNA polymerase used for intermediate and late genes expression consists of eight subunits Rpo30/OPG66, Rpo7/OPG90, Rpo22/OPG103, Rpo147/OPG105, Rpo18/OPG119, Rpo19/OPG131, Rpo132/OPG151 and Rpo35/OPG156. The same holoenzyme, with the addition of the transcription-specificity factor OPG109, is used for early gene expression.

It is found in the virion. The catalysed reaction is RNA(n) + a ribonucleoside 5'-triphosphate = RNA(n+1) + diphosphate. Part of the DNA-dependent RNA polymerase which catalyzes the transcription of viral DNA into RNA using the four ribonucleoside triphosphates as substrates. Responsible for the transcription of early, intermediate and late genes. DNA-dependent RNA polymerase associates with the early transcription factor (ETF), itself composed of OPG118 and OPG133, thereby allowing the early genes transcription. Late transcription, and probably also intermediate transcription, require newly synthesized RNA polymerase. This is DNA-directed RNA polymerase 18 kDa subunit (OPG119) from Vaccinia virus (strain Ankara) (VACV).